Consider the following 241-residue polypeptide: Small ribosomal subunit protein uS2 (241 aa).

The protein belongs to the universal ribosomal protein uS2 family.

This is Small ribosomal subunit protein uS2 from Escherichia coli O127:H6 (strain E2348/69 / EPEC).